Reading from the N-terminus, the 355-residue chain is Holliday junction branch migration complex subunit RuvB (355 aa).

A large ATPase domain (RuvB-L) region spans residues Thr4–Tyr190. ATP is bound by residues Leu29, Arg30, Gly71, Lys74, Thr75, Thr76, Glu137–Tyr139, Arg180, Tyr190, and Arg227. Residue Thr75 coordinates Mg(2+). The interval Asp191 to Asp261 is small ATPAse domain (RuvB-S). The tract at residues Pro264–Gln355 is head domain (RuvB-H). DNA-binding residues include Arg300, Arg319, and Arg324.

This sequence belongs to the RuvB family. As to quaternary structure, homohexamer. Forms an RuvA(8)-RuvB(12)-Holliday junction (HJ) complex. HJ DNA is sandwiched between 2 RuvA tetramers; dsDNA enters through RuvA and exits via RuvB. An RuvB hexamer assembles on each DNA strand where it exits the tetramer. Each RuvB hexamer is contacted by two RuvA subunits (via domain III) on 2 adjacent RuvB subunits; this complex drives branch migration. In the full resolvosome a probable DNA-RuvA(4)-RuvB(12)-RuvC(2) complex forms which resolves the HJ.

Its subcellular location is the cytoplasm. It carries out the reaction ATP + H2O = ADP + phosphate + H(+). In terms of biological role, the RuvA-RuvB-RuvC complex processes Holliday junction (HJ) DNA during genetic recombination and DNA repair, while the RuvA-RuvB complex plays an important role in the rescue of blocked DNA replication forks via replication fork reversal (RFR). RuvA specifically binds to HJ cruciform DNA, conferring on it an open structure. The RuvB hexamer acts as an ATP-dependent pump, pulling dsDNA into and through the RuvAB complex. RuvB forms 2 homohexamers on either side of HJ DNA bound by 1 or 2 RuvA tetramers; 4 subunits per hexamer contact DNA at a time. Coordinated motions by a converter formed by DNA-disengaged RuvB subunits stimulates ATP hydrolysis and nucleotide exchange. Immobilization of the converter enables RuvB to convert the ATP-contained energy into a lever motion, pulling 2 nucleotides of DNA out of the RuvA tetramer per ATP hydrolyzed, thus driving DNA branch migration. The RuvB motors rotate together with the DNA substrate, which together with the progressing nucleotide cycle form the mechanistic basis for DNA recombination by continuous HJ branch migration. Branch migration allows RuvC to scan DNA until it finds its consensus sequence, where it cleaves and resolves cruciform DNA. The sequence is that of Holliday junction branch migration complex subunit RuvB from Burkholderia multivorans (strain ATCC 17616 / 249).